The chain runs to 523 residues: 2-isopropylmalate synthase (523 aa).

Residues 5-267 form the Pyruvate carboxyltransferase domain; the sequence is VIIFDTTLRD…HTNINHHEIW (263 aa). Mn(2+) is bound by residues Asp14, His202, His204, and Asn238. Positions 392–523 are regulatory domain; it reads RLDYFSVQSG…QNKENNKETV (132 aa).

Belongs to the alpha-IPM synthase/homocitrate synthase family. LeuA type 1 subfamily. In terms of assembly, homodimer. The cofactor is Mn(2+).

It is found in the cytoplasm. It carries out the reaction 3-methyl-2-oxobutanoate + acetyl-CoA + H2O = (2S)-2-isopropylmalate + CoA + H(+). The protein operates within amino-acid biosynthesis; L-leucine biosynthesis; L-leucine from 3-methyl-2-oxobutanoate: step 1/4. In terms of biological role, catalyzes the condensation of the acetyl group of acetyl-CoA with 3-methyl-2-oxobutanoate (2-ketoisovalerate) to form 3-carboxy-3-hydroxy-4-methylpentanoate (2-isopropylmalate). This chain is 2-isopropylmalate synthase, found in Salmonella newport (strain SL254).